The following is a 178-amino-acid chain: Adenine phosphoribosyltransferase (178 aa).

It belongs to the purine/pyrimidine phosphoribosyltransferase family. Homodimer.

It localises to the cytoplasm. The enzyme catalyses AMP + diphosphate = 5-phospho-alpha-D-ribose 1-diphosphate + adenine. Its pathway is purine metabolism; AMP biosynthesis via salvage pathway; AMP from adenine: step 1/1. Catalyzes a salvage reaction resulting in the formation of AMP, that is energically less costly than de novo synthesis. The polypeptide is Adenine phosphoribosyltransferase (Helicobacter hepaticus (strain ATCC 51449 / 3B1)).